A 265-amino-acid chain; its full sequence is Probable ribose-5-phosphate isomerase 2 (265 aa).

Ala-2 bears the N-acetylalanine mark. Phosphoserine is present on Ser-96.

This sequence belongs to the ribose 5-phosphate isomerase family.

It is found in the cytoplasm. It carries out the reaction aldehydo-D-ribose 5-phosphate = D-ribulose 5-phosphate. It functions in the pathway carbohydrate degradation; pentose phosphate pathway; D-ribose 5-phosphate from D-ribulose 5-phosphate (non-oxidative stage): step 1/1. In terms of biological role, catalyzes the reversible conversion of ribose-5-phosphate to ribulose 5-phosphate. This Arabidopsis thaliana (Mouse-ear cress) protein is Probable ribose-5-phosphate isomerase 2 (RPI2).